Here is a 211-residue protein sequence, read N- to C-terminus: N-(5'-phosphoribosyl)anthranilate isomerase (211 aa).

Belongs to the TrpF family.

The catalysed reaction is N-(5-phospho-beta-D-ribosyl)anthranilate = 1-(2-carboxyphenylamino)-1-deoxy-D-ribulose 5-phosphate. It functions in the pathway amino-acid biosynthesis; L-tryptophan biosynthesis; L-tryptophan from chorismate: step 3/5. The protein is N-(5'-phosphoribosyl)anthranilate isomerase of Methanococcus maripaludis (strain C6 / ATCC BAA-1332).